The sequence spans 956 residues: Dual specificity protein kinase YAK1 homolog (956 aa).

Positions 122-464 (YIVKDLLGHG…PFQAAKHPFI (343 aa)) constitute a Protein kinase domain. ATP-binding positions include 128–136 (LGHGTFGQV) and K151. The residue at position 222 (S222) is a Phosphoserine. D249 serves as the catalytic Proton acceptor. 3 disordered regions span residues 620 to 657 (LGTS…HGSP), 672 to 781 (SAGY…NYSD), and 806 to 956 (GSTD…GSIA). The segment covering 622–636 (TSPSQFTPNTNNQFL) has biased composition (polar residues). Positions 672 to 691 (SAGYSGGSQSQDSSLSQAQG) are enriched in low complexity. Composition is skewed to polar residues over residues 697-713 (FYQN…SPSR), 725-757 (QTQG…SSTA), and 806-817 (GSTDASSYSRRF). Over residues 818 to 830 (NSNASTSSSNPTT) the composition is skewed to low complexity. Composition is skewed to polar residues over residues 838–849 (QAFSQVETGSPP), 870–884 (VSQN…QPPQ), and 902–912 (MNAQLPPSNTN). A compositionally biased stretch (low complexity) spans 913–924 (SGGQQRSPRSSS). Polar residues predominate over residues 937–947 (NHVPNVPSTSH).

It belongs to the protein kinase superfamily. Ser/Thr protein kinase family. In terms of processing, autophosphorylated at Ser-222.

It carries out the reaction L-seryl-[protein] + ATP = O-phospho-L-seryl-[protein] + ADP + H(+). The catalysed reaction is L-threonyl-[protein] + ATP = O-phospho-L-threonyl-[protein] + ADP + H(+). The enzyme catalyses L-tyrosyl-[protein] + ATP = O-phospho-L-tyrosyl-[protein] + ADP + H(+). Dual specificity protein kinase that phosphorylates ANN1, ANN2 and CP29B at serine and threonine residues, and ANN1, ANN2 and ANN4 at tyrosine residues. May regulate the phosphorylation status of annexin proteins. Acts as a positive regulator in abscisic acid (ABA)-mediated regulation of postgermination growth and drought response. May regulate the expression of ABA-responsive genes such as RD22, RD29A, LTI65/RD29B and RAB18. The protein is Dual specificity protein kinase YAK1 homolog of Arabidopsis thaliana (Mouse-ear cress).